A 734-amino-acid polypeptide reads, in one-letter code: Fc receptor-like protein 3 (734 aa).

The first 17 residues, 1 to 17, serve as a signal peptide directing secretion; sequence MLLWLLLLILTPGREQS. Residues 18-573 lie on the Extracellular side of the membrane; it reads GVAPKAVLLL…GTSRNRTGLT (556 aa). Ig-like C2-type domains lie at 21–98, 99–182, 192–270, 284–369, 383–470, and 476–563; these read PKAV…VEFS, PDWL…KPLN, PVLR…HSIK, PVSN…PILS, PVLT…LRVT, and PVLT…LNVT. Cystine bridges form between Cys-44/Cys-82, Cys-120/Cys-163, Cys-211/Cys-260, Cys-309/Cys-358, Cys-404/Cys-451, and Cys-497/Cys-544. N-linked (GlcNAc...) asparagine glycosylation is present at Asn-561. The helical transmembrane segment at 574-594 threads the bilayer; it reads AAGITGLVLSILVLAAAAALL. At 595–734 the chain is on the cytoplasmic side; it reads HYARARRKPG…VPRVLLASDH (140 aa). The disordered stretch occupies residues 603-655; sequence PGGLSATGTSSHSPSECQEPSSSRPSRIDPQEPTHSKPLAPMELEPMYSNVNP. Positions 608–627 are enriched in polar residues; that stretch reads ATGTSSHSPSECQEPSSSRP. Residues 628–637 are compositionally biased toward basic and acidic residues; that stretch reads SRIDPQEPTH. 4 short sequence motifs (ITIM motif) span residues 648–653, 660–665, 690–695, and 720–725; these read PMYSNV, PIYSQI, VLYSEL, and ENYENV. Tyr-650, Tyr-662, Tyr-692, and Tyr-722 each carry phosphotyrosine. The disordered stretch occupies residues 695–734; the sequence is LKKTHPDDSAGEASSRGRAHEEDDEENYENVPRVLLASDH.

Interacts (via phosphorylated ITIM motifs) with phosphatases INPP5D, PTPN6 and PTPN11. Interacts (via ITIM motifs) SYK and ZAP70. Interacts with IZUMO1R/JUNO. Interacts (via extracellular domain) with IZUMO1; the interaction replaces IZUMO1R/JUNO as IZUMO1 receptor after adhesion between sperm and egg. Phosphorylated on cytoplasmic tyrosines; required for interaction with protein tyrosine phosphatases and protein tyrosine kinases. As to expression, primarily expressed in secondary lymphoid tissues by mature subsets of B-cells. Low expression on transitional B cells which increases to higher surface expression on mature and memory B-cells with innate-like features (at protein level). Expressed a low levels in naive and germinal center B-cells but also expressed in NK cells (at protein level). Expressed in unfertilized oocytes (at protein level). Expressed in a population of thymically derived naturally occurring regulatory T-cells that exhibits a memory phenotype, specialized in suppressing immune response to self-antigens. Detected in spleen, lymph node, peripheral blood lymphocytes, thymus, bone marrow, kidney, salivary gland, adrenal gland and uterus.

The protein resides in the cell membrane. The protein localises to the cell projection. It localises to the microvillus membrane. Promotes TLR9-induced B-cell proliferation, activation and survival but inhibits antibody production and suppresses plasma cell differentiation. Enhances activation of NF-kappa-B and MAPK signaling pathways in TLR9 stimulated B-cells. Has inhibitory potentional on B-cell receptor (BCR)-mediated signaling, possibly through association with SH2 domain-containing phosphatases. Inhibits cell tyrosine phosphorylation, calcium mobilization and activation-induced cell death induced through BCR signaling. Regulatory T-cells expressing FCRL3 exhibit a memory phenotype, are relatively nonresponsive to antigenic stimulation in presence of IL2 and have reduced capacity to suppress the proliferation of effector T-cells. Acts as a human-specific epitope on the cell surface of oocytes (oolemma) and plays a role during sperm-egg adhesion and fusion. Interacts with the IZUMO1-IZUMO1R/JUNO sperm-egg complex and replaces IZUMO1R/JUNO as IZUMO1 receptor during fertilization, thereby permitting species-specific gamete fusion. This Homo sapiens (Human) protein is Fc receptor-like protein 3.